We begin with the raw amino-acid sequence, 208 residues long: Golgi apparatus membrane protein TVP23 homolog B (208 aa).

Met1 carries the N-acetylmethionine modification. Residues 1-21 show a composition bias toward acidic residues; sequence MLQQDSNDDTEDVSLFDAEEE. A disordered region spans residues 1–27; the sequence is MLQQDSNDDTEDVSLFDAEEETTNRPK. 4 consecutive transmembrane segments (helical) span residues 34 to 53, 54 to 72, 126 to 146, and 152 to 172; these read PVASFFHLFFRVSAIIVYLL, CELFSSSFIACMVTIILLL, IFWLGLVACPVLWVVFAFSAL, and KWLAVVIMGVVLQGANLYGYI.

The protein belongs to the TVP23 family.

Its subcellular location is the membrane. The protein is Golgi apparatus membrane protein TVP23 homolog B (TVP23B) of Bos taurus (Bovine).